Consider the following 1020-residue polypeptide: MQATAVVETDSDKSYHKNGGHLQNDKLYYPKKENMLFSNGCNRVKLTFPDGEGDSLTTDERTNVKENSSVDKRDLSELSFSETQDTNVENLFSQSSEFEDNIEYAFLNETYSIHYSESKLKDENILHLYSELDPEVHERVEVFFDTFGPQGNNDIGLGRSCEALGSACGDMQKSDVREDSQQEYHSAELECLSAHLAVDPAKTVSRSSLDVSEWRTSSYTFKCGGNLEVNRGKLESGPIPFLESLNGFSPKCSPQVSTSPSSDMLKEYHEPKYEKYKEQEVGLTYHKTFDDILQRSSSPLNSQKVPEPLVYAKEMKSQTIEGKDFYGDRIFQNRALQHPENAMFPQDHALETPLKALDAHQLSGPYVLDDSVISLCGSLQYNSLPEPGFYSPVMPRVAVTDSQAEVAGSCLHHVQGSATNKTCSLMKEMCLKSGPDAANCVALGQQTLDVSGRANVSSSVVSTASTTETKTVRRSQPEEWQRDRQSVACNTDWSCGQQCRSARAAALGSDSGRPLSTDCLNCGNSMDENSLELRKTPDKQRHPERAFQLCEEMALPSKCCEKTTERAVKAETHLLDVCYQMCHHHCHHIYKLVMGSRAGLSRNLPTDSAQKELGTALLSVLEDLKARYMNLKGKVHKGIPLEELPPLSVESKLLSAFSDFASRLMKEEACSLSGANSELDNQSLPEVAISPSLLKTLSQMSSISDSSHPKQDKLPMNNIFKNCDINIDFNHLKLNDKESKNVHEASEDWFDATERLTGTDFSVTQENITESEDWDPKNPLESELKTIERLRRGKGFLIHVGGLCPSVSEADLRSHFQKYQVSEISIYDSNTNYRYASLACAKNSNAKMAVKEMNGVEINGKSVNVRLVKIPGEYIPPLLSTAGNNISMNHLERNSSKDATSAASTCRLPIARSGQLESEQDSEFLPLVQGVRENCNQVKSGQSLPETPFQFIPPHTLNLRSFTKIMKRLAELHPEISRDHIIEALQEVRINHKGFLNGLSINTIVKMTSSFLRNAASRLK.

Disordered stretches follow at residues methionine 1–glutamine 23 and aspartate 50–valine 70. The span at threonine 58–valine 70 shows a compositional bias: basic and acidic residues. Phosphoserine is present on residues serine 249, serine 371, serine 374, serine 516, serine 683, and serine 690. Positions phenylalanine 796–isoleucine 870 constitute an RRM domain.

As to quaternary structure, homodimer. Interacts with TEX14.

Its subcellular location is the cytoplasm. Functionally, component of intercellular bridges during meiosis. Intercellular bridges are evolutionarily conserved structures that connect differentiating germ cells. Not required for fertility. The sequence is that of RNA-binding protein 44 (Rbm44) from Rattus norvegicus (Rat).